The primary structure comprises 497 residues: tRNA-2-methylthio-N(6)-dimethylallyladenosine synthase (497 aa).

Positions 1-50 (MTGTSNIPTHGKEHKDAPALLPLPAPNPHHTHAAHPGNPSHDRPPSRGKL) are disordered. One can recognise an MTTase N-terminal domain in the interval 48–165 (GKLFIKTHGC…LPDMIRARRE (118 aa)). 6 residues coordinate [4Fe-4S] cluster: Cys-57, Cys-94, Cys-128, Cys-202, Cys-206, and Cys-209. The Radical SAM core domain maps to 188 to 430 (RAEGPSAFVS…QKHINTYAAD (243 aa)). Residues 433–496 (KRMIGTVQTV…SNSLRGRVHT (64 aa)) form the TRAM domain.

The protein belongs to the methylthiotransferase family. MiaB subfamily. As to quaternary structure, monomer. [4Fe-4S] cluster serves as cofactor.

It localises to the cytoplasm. It carries out the reaction N(6)-dimethylallyladenosine(37) in tRNA + (sulfur carrier)-SH + AH2 + 2 S-adenosyl-L-methionine = 2-methylsulfanyl-N(6)-dimethylallyladenosine(37) in tRNA + (sulfur carrier)-H + 5'-deoxyadenosine + L-methionine + A + S-adenosyl-L-homocysteine + 2 H(+). Functionally, catalyzes the methylthiolation of N6-(dimethylallyl)adenosine (i(6)A), leading to the formation of 2-methylthio-N6-(dimethylallyl)adenosine (ms(2)i(6)A) at position 37 in tRNAs that read codons beginning with uridine. This chain is tRNA-2-methylthio-N(6)-dimethylallyladenosine synthase, found in Xylella fastidiosa (strain 9a5c).